The following is a 792-amino-acid chain: Cullin-4 (792 aa).

Polar residues predominate over residues 1–10 (MSLPTKRSTF). Residues 1–43 (MSLPTKRSTFSAASASDDSSYSSPPMKKAKNDLHHSPQHPNTA) are disordered. The span at 11–23 (SAASASDDSSYSS) shows a compositional bias: low complexity. The 61-residue stretch at 724-784 (DRQYQIDAAI…REYLEREKSN (61 aa)) folds into the Cullin neddylation domain. Lys-738 is covalently cross-linked (Glycyl lysine isopeptide (Lys-Gly) (interchain with G-Cter in NEDD8)).

It belongs to the cullin family. In terms of assembly, interacts with COP10, CSN3, CSN4, CSN5, CSN8, DDB1A, DDB1B, DDB2, DET1 and RBX1. In terms of processing, neddylated (rubylated). Deneddylated via its interaction with the COP9 signalosome (CSN) complex. As to expression, ubiquitous.

The protein localises to the nucleus. Its pathway is protein modification; protein ubiquitination. Functionally, component of the CUL4-RBX1-CDD (COP10-DDB1a-DET1) E3 ubiquitin-protein ligase complex which mediates the ubiquitination and subsequent proteasomal degradation of target proteins. Participates in the CDD complex to light-mediated control of development. May repress photomorphogenesis through enhancing COP1 E3 ubiquitin-protein ligase activity. Acts together with the CUL4-DDB1-COP1-SPA E3 ubiquitin-protein ligase complexes in the repression of photomorphogenesis and flowering time. Component ot the CUL4-RBX1-DDB1-PRL1 E3 ubiquitin-protein ligase complex which mediates ubiquitination and subsequent degradation of AKIN10. Component of the CUL4-RBX1-DDB1-DWA1/DWA2 E3 ubiquitin-protein ligase complex that acts as a negative regulator in abscisic acid (ABA) signaling and may target ABI5 for degradation. The chain is Cullin-4 (CUL4) from Arabidopsis thaliana (Mouse-ear cress).